The chain runs to 292 residues: Peroxisomal 2,4-dienoyl-CoA reductase SPS19 [(3E)-enoyl-CoA-producing] (292 aa).

NADP(+)-binding residues include I36, D85, and K145. The active-site Proton donor is S162. K180 lines the NADP(+) pocket. K180 functions as the Lowers pKa of active site Tyr in the catalytic mechanism. K188 is covalently cross-linked (Glycyl lysine isopeptide (Lys-Gly) (interchain with G-Cter in ubiquitin)). Position 209 (I209) interacts with NADP(+). A Microbody targeting signal motif is present at residues 290–292; sequence SKL.

It belongs to the short-chain dehydrogenases/reductases (SDR) family. In terms of assembly, homodimer.

The protein resides in the peroxisome. The enzyme catalyses a (2E,4Z)-dienoyl-CoA + NADPH + H(+) = a 4,5-saturated-(3E)-enoyl-CoA + NADP(+). It carries out the reaction a (2E,4E)-dienoyl-CoA + NADPH + H(+) = a 4,5-saturated-(3E)-enoyl-CoA + NADP(+). Functionally, auxiliary enzyme of beta-oxidation. Participates in the degradation of unsaturated fatty enoyl-CoA esters having double bonds in both even- and odd-numbered positions in peroxisome. Catalyzes the NADP-dependent reduction of 2,4-dienoyl-CoA to yield trans-3-enoyl-CoA. Dispensable for growth and sporulation on solid acetate and oleate media, but is essential for these processes to occur on petroselineate. In Saccharomyces cerevisiae (strain ATCC 204508 / S288c) (Baker's yeast), this protein is Peroxisomal 2,4-dienoyl-CoA reductase SPS19 [(3E)-enoyl-CoA-producing] (SPS19).